The chain runs to 440 residues: COP9 signalosome complex subunit 5 (440 aa).

An MPN domain is found at 71 to 218 (VLISKLSCEK…MGAFRTIESK (148 aa)). Residues H164, H166, and D177 each contribute to the Zn(2+) site. The JAMM motif signature appears at 164-177 (HSHPGYDCWLSNID). A compositionally biased stretch (polar residues) spans 319 to 341 (TQRGDSTETSSFGSMFSGDNTSD). Disordered regions lie at residues 319–343 (TQRG…SDVD) and 375–399 (SSRS…CHDE).

The protein belongs to the peptidase M67A family. CSN5 subfamily. Component of a COP9 signalosome-like (CSN) complex, composed of at least RRI1/CSN5, CSN9, RRI2/CSN10, PCI8/CSN11, CSN12 and CSI1. Within this complex it probably interacts directly with CSN12. Also interacts with RPN5. The cofactor is a divalent metal cation.

The protein localises to the cytoplasm. Its subcellular location is the nucleus. Functionally, catalytic component of the COP9 signalosome (CSN) complex that acts as an regulator of the ubiquitin (Ubl) conjugation pathway by mediating the deneddylation of the cullin subunit of SCF-type E3 ubiquitin-protein ligase complexes. The CSN complex is involved in the regulation of the mating pheromone response. The protein is COP9 signalosome complex subunit 5 (RRI1) of Saccharomyces cerevisiae (strain ATCC 204508 / S288c) (Baker's yeast).